Reading from the N-terminus, the 123-residue chain is uncharacterized protein (123 aa).

Residues 1-25 (MKHGIKALLITLSLACAGMSHSALA) form the signal peptide. Low complexity predominate over residues 40–53 (EAPAAQSKAAVPAK). The tract at residues 40–62 (EAPAAQSKAAVPAKASDEEGTRV) is disordered. HhH domains lie at 60 to 90 (TRVS…IVSY) and 91 to 120 (REEY…NLAV).

This is an uncharacterized protein from Escherichia coli (strain K12).